Consider the following 145-residue polypeptide: Ribosomal RNA large subunit methyltransferase H (145 aa).

S-adenosyl-L-methionine contacts are provided by residues G94 and 113 to 118 (LSPLTF).

The protein belongs to the RNA methyltransferase RlmH family. In terms of assembly, homodimer.

Its subcellular location is the cytoplasm. The catalysed reaction is pseudouridine(1915) in 23S rRNA + S-adenosyl-L-methionine = N(3)-methylpseudouridine(1915) in 23S rRNA + S-adenosyl-L-homocysteine + H(+). In terms of biological role, specifically methylates the pseudouridine at position 1915 (m3Psi1915) in 23S rRNA. In Sorangium cellulosum (strain So ce56) (Polyangium cellulosum (strain So ce56)), this protein is Ribosomal RNA large subunit methyltransferase H.